The following is a 586-amino-acid chain: A-type ATP synthase subunit A (586 aa).

G232–T239 provides a ligand contact to ATP.

The protein belongs to the ATPase alpha/beta chains family. As to quaternary structure, has multiple subunits with at least A(3), B(3), C, D, E, F, H, I and proteolipid K(x).

Its subcellular location is the cell membrane. It catalyses the reaction ATP + H2O + 4 H(+)(in) = ADP + phosphate + 5 H(+)(out). Component of the A-type ATP synthase that produces ATP from ADP in the presence of a proton gradient across the membrane. The A chain is the catalytic subunit. This is A-type ATP synthase subunit A from Methanococcus maripaludis (strain C5 / ATCC BAA-1333).